A 238-amino-acid chain; its full sequence is MLKYLNQAEAIKVDQILFNEYKFSVDQLMELAGLSCAHAVAKCFPSPCQGNDDKAGKLRVLVCCGPGNNGGDGLVCARHLALMGYEPTIYYPKPTAKPLYENLHHQCELMEISTISQCPSVEEAAHSYHLIVDALFGFSFKPPVRSDFLSVMELMQQTKIPIASIDIPSGWDVEKGKLNDCELEPKLLISLTAPKLCAKHFKGQYHYLGGRFVPPALQRQYELNLPNYPGTELCVKLS.

One can recognise a YjeF N-terminal domain in the interval A10–L225. Residue N68–D72 participates in (6S)-NADPHX binding. The K(+) site is built by N69 and D133. Residues G137–P143 and D166 each bind (6S)-NADPHX. S169 is a binding site for K(+).

The protein belongs to the NnrE/AIBP family. The cofactor is K(+).

The catalysed reaction is (6R)-NADHX = (6S)-NADHX. It carries out the reaction (6R)-NADPHX = (6S)-NADPHX. Catalyzes the epimerization of the S- and R-forms of NAD(P)HX, a damaged form of NAD(P)H that is a result of enzymatic or heat-dependent hydration. This is a prerequisite for the S-specific NAD(P)H-hydrate dehydratase to allow the repair of both epimers of NAD(P)HX. The sequence is that of NAD(P)H-hydrate epimerase from Drosophila willistoni (Fruit fly).